The sequence spans 338 residues: 1-aminocyclopropane-1-carboxylate deaminase (338 aa).

Lys-51 is subject to N6-(pyridoxal phosphate)lysine. Residue Ser-78 is the Nucleophile of the active site.

It belongs to the ACC deaminase/D-cysteine desulfhydrase family. As to quaternary structure, homotrimer. It depends on pyridoxal 5'-phosphate as a cofactor.

It carries out the reaction 1-aminocyclopropane-1-carboxylate + H2O = 2-oxobutanoate + NH4(+). In terms of biological role, catalyzes a cyclopropane ring-opening reaction, the irreversible conversion of 1-aminocyclopropane-1-carboxylate (ACC) to ammonia and alpha-ketobutyrate. Allows growth on ACC as a nitrogen source. In Burkholderia thailandensis (strain ATCC 700388 / DSM 13276 / CCUG 48851 / CIP 106301 / E264), this protein is 1-aminocyclopropane-1-carboxylate deaminase.